The primary structure comprises 184 residues: Ribose 1,5-bisphosphate phosphokinase PhnN (184 aa).

11–18 (GPSGAGKD) is a binding site for ATP.

It belongs to the ribose 1,5-bisphosphokinase family.

The enzyme catalyses alpha-D-ribose 1,5-bisphosphate + ATP = 5-phospho-alpha-D-ribose 1-diphosphate + ADP. It participates in metabolic intermediate biosynthesis; 5-phospho-alpha-D-ribose 1-diphosphate biosynthesis; 5-phospho-alpha-D-ribose 1-diphosphate from D-ribose 5-phosphate (route II): step 3/3. In terms of biological role, catalyzes the phosphorylation of ribose 1,5-bisphosphate to 5-phospho-D-ribosyl alpha-1-diphosphate (PRPP). This chain is Ribose 1,5-bisphosphate phosphokinase PhnN, found in Burkholderia pseudomallei (strain K96243).